The following is a 345-amino-acid chain: MTTQDKDLTAQTASRVLSGIQPTADSYHLGNYLGAVKQWIDLQDSYDAFYFIPDLHAITVDQEPEELRNRTISGAAQLLALGIDPERSTLFVQSHVPAHAELSWVLTCLTGFGEASRMTQFKDKSSKRGADRTSAGLFTYPMLMAADILLYRPHLVPVGEDQRQHLELTRTLAERFNNRFGKAFEVPEGFIPQGASKIYDLQNPTAKMSKSGDNPKGIINLLDDPKVSTKRIKSAVTDNDGVIAYDPENKPGVSNLLVIQSALTGTSIDSLVDGYQGAGYGALKGDTADALEAFTTPLKAKYDEYMNDRGELERVLAIGAERATEVANETLADVYDKIGFLASRR.

ATP is bound by residues 21–23 (QPT) and 30–31 (GN). The 'HIGH' region motif lies at 22-31 (PTADSYHLGN). Asp147 is an L-tryptophan binding site. ATP contacts are provided by residues 159 to 161 (GED), Ile198, and 207 to 211 (KMSKS). Positions 207–211 (KMSKS) match the 'KMSKS' region motif.

It belongs to the class-I aminoacyl-tRNA synthetase family. As to quaternary structure, homodimer.

It is found in the cytoplasm. The catalysed reaction is tRNA(Trp) + L-tryptophan + ATP = L-tryptophyl-tRNA(Trp) + AMP + diphosphate + H(+). Its function is as follows. Catalyzes the attachment of tryptophan to tRNA(Trp). This is Tryptophan--tRNA ligase from Corynebacterium glutamicum (strain ATCC 13032 / DSM 20300 / JCM 1318 / BCRC 11384 / CCUG 27702 / LMG 3730 / NBRC 12168 / NCIMB 10025 / NRRL B-2784 / 534).